A 199-amino-acid polypeptide reads, in one-letter code: Large ribosomal subunit protein uL13A (199 aa).

Ser2 is subject to N-acetylserine. Lys177 participates in a covalent cross-link: Glycyl lysine isopeptide (Lys-Gly) (interchain with G-Cter in ubiquitin).

It belongs to the universal ribosomal protein uL13 family. As to quaternary structure, component of the large ribosomal subunit (LSU). Mature yeast ribosomes consist of a small (40S) and a large (60S) subunit. The 40S small subunit contains 1 molecule of ribosomal RNA (18S rRNA) and 33 different proteins (encoded by 57 genes). The large 60S subunit contains 3 rRNA molecules (25S, 5.8S and 5S rRNA) and 46 different proteins (encoded by 81 genes). Post-translationally, N-terminally acetylated by acetyltransferase NatA.

The protein resides in the cytoplasm. In terms of biological role, component of the ribosome, a large ribonucleoprotein complex responsible for the synthesis of proteins in the cell. The small ribosomal subunit (SSU) binds messenger RNAs (mRNAs) and translates the encoded message by selecting cognate aminoacyl-transfer RNA (tRNA) molecules. The large subunit (LSU) contains the ribosomal catalytic site termed the peptidyl transferase center (PTC), which catalyzes the formation of peptide bonds, thereby polymerizing the amino acids delivered by tRNAs into a polypeptide chain. The nascent polypeptides leave the ribosome through a tunnel in the LSU and interact with protein factors that function in enzymatic processing, targeting, and the membrane insertion of nascent chains at the exit of the ribosomal tunnel. The chain is Large ribosomal subunit protein uL13A from Saccharomyces cerevisiae (strain ATCC 204508 / S288c) (Baker's yeast).